Reading from the N-terminus, the 214-residue chain is DELTA-actitoxin-Aeq1a (214 aa).

Residues 1–19 (MSRLIIVFIVVTMICSATA) form the signal peptide. Positions 20–35 (LPSKKIIDEDEEDEKR) are excised as a propeptide. The interval 38–47 (DVAGAVIDGA) is plays an important role in the hemolytic activity. Positions 46-65 (GASLSFDILKTVLEALGNVK) are N-terminal region. Phosphocholine-binding residues include S89, V122, S140, P142, Y168, Y172, and Y173. Residues 140–155 (SVPYDYNWYSNWWNVR) form a trp-rich region, which is important for the binding to lipid membrane region. The short motif at 179 to 181 (RGD) is the Cell attachment site, crucial for protein stability element.

This sequence belongs to the actinoporin family. Sea anemone subfamily. Octamer or nonamer in membranes. Monomer in the soluble state.

Its subcellular location is the secreted. It localises to the nematocyst. The protein localises to the target cell membrane. Pore-forming protein that forms cations-selective hydrophilic pores of around 1 nm and causes cardiac stimulation and cytolysis. Pore formation is a multi-step process that involves specific recognition of membrane sphingomyelin (but neither cholesterol nor phosphatidylcholine) using aromatic rich region and adjacent phosphocholine (POC) binding site, firm binding to the membrane (mainly driven by hydrophobic interactions) accompanied by the transfer of the N-terminal region to the lipid-water interface and finally pore formation after oligomerization of monomers. Cytolytic effects include red blood cells hemolysis, platelet aggregation and lysis, cytotoxic and cytostatic effects on fibroblasts. Lethality in mammals has been ascribed to severe vasospasm of coronary vessels, cardiac arrhythmia, and inotropic effects. This chain is DELTA-actitoxin-Aeq1a, found in Actinia equina (Beadlet anemone).